The following is a 398-amino-acid chain: uncharacterized protein (398 aa).

It belongs to the glycosyltransferase 2 family.

This is an uncharacterized protein from Escherichia coli (strain K12).